A 306-amino-acid chain; its full sequence is 2-phosphoglycerate kinase (306 aa).

One can recognise an ATP-cone domain in the interval 1-90 (MIMVQGEVSG…LWRKIRQCKE (90 aa)).

The protein belongs to the 2-phosphoglycerate kinase family. The cofactor is a divalent metal cation.

The enzyme catalyses (2R)-2-phosphoglycerate + ATP = (2R)-2,3-bisphosphoglycerate + ADP + H(+). The protein operates within thermoadapter biosynthesis; cyclic 2,3-diphosphoglycerate biosynthesis; cyclic 2,3-diphosphoglycerate from 2-phospho-D-glycerate: step 1/2. In terms of biological role, catalyzes the phosphorylation of 2-phosphoglycerate to 2,3-diphosphoglycerate. Involved in the biosynthesis of cyclic 2,3-bisphosphoglycerate, a thermoprotectant. In Methanothermobacter thermautotrophicus (strain ATCC 29096 / DSM 1053 / JCM 10044 / NBRC 100330 / Delta H) (Methanobacterium thermoautotrophicum), this protein is 2-phosphoglycerate kinase.